Reading from the N-terminus, the 227-residue chain is Thymidylate kinase (227 aa).

ATP is bound at residue 16-23; sequence GIDGAGKT.

It belongs to the thymidylate kinase family.

It carries out the reaction dTMP + ATP = dTDP + ADP. Functionally, phosphorylation of dTMP to form dTDP in both de novo and salvage pathways of dTTP synthesis. The protein is Thymidylate kinase of Xanthomonas oryzae pv. oryzae (strain MAFF 311018).